The chain runs to 382 residues: Cysteine desulfurase IscS 1 (382 aa).

Asparagine 149 lines the pyridoxal 5'-phosphate pocket. The Cysteine persulfide intermediate role is filled by cysteine 321. A [2Fe-2S] cluster-binding site is contributed by cysteine 321.

It belongs to the class-V pyridoxal-phosphate-dependent aminotransferase family. NifS/IscS subfamily. Homodimer. Forms a heterotetramer with IscU, interacts with other sulfur acceptors. Pyridoxal 5'-phosphate serves as cofactor.

The protein localises to the cytoplasm. The enzyme catalyses (sulfur carrier)-H + L-cysteine = (sulfur carrier)-SH + L-alanine. It functions in the pathway cofactor biosynthesis; iron-sulfur cluster biosynthesis. Its function is as follows. Master enzyme that delivers sulfur to a number of partners involved in Fe-S cluster assembly, tRNA modification or cofactor biosynthesis. Catalyzes the removal of elemental sulfur atoms from cysteine to produce alanine. Functions as a sulfur delivery protein for Fe-S cluster synthesis onto IscU, an Fe-S scaffold assembly protein, as well as other S acceptor proteins. This chain is Cysteine desulfurase IscS 1, found in Archaeoglobus fulgidus (strain ATCC 49558 / DSM 4304 / JCM 9628 / NBRC 100126 / VC-16).